A 434-amino-acid chain; its full sequence is Tryptophan synthase beta chain 2 (434 aa).

An N6-(pyridoxal phosphate)lysine modification is found at Lys-110.

It belongs to the TrpB family. As to quaternary structure, tetramer of two alpha and two beta chains. The cofactor is pyridoxal 5'-phosphate.

The catalysed reaction is (1S,2R)-1-C-(indol-3-yl)glycerol 3-phosphate + L-serine = D-glyceraldehyde 3-phosphate + L-tryptophan + H2O. It participates in amino-acid biosynthesis; L-tryptophan biosynthesis; L-tryptophan from chorismate: step 5/5. Its function is as follows. The beta subunit is responsible for the synthesis of L-tryptophan from indole and L-serine. This Aquifex aeolicus (strain VF5) protein is Tryptophan synthase beta chain 2 (trpB2).